Here is a 1056-residue protein sequence, read N- to C-terminus: Potassium transporter TRK1 (1056 aa).

The Cytoplasmic segment spans residues 1–46 (MLYRVSGFYKRHTRNFTNIDYGYYIRNFIHHIASKIYPYAKVVLPN). Residues 47–67 (FRAAHYFYILTLVILGSILVY) form a helical membrane-spanning segment. Topologically, residues 68-73 (PVKTCA) are extracellular. An intramembrane segment occupies 74–90 (YIDVLFFTAGASTQAGL). Topologically, residues 91-99 (NTVNVNDLS) are extracellular. A helical membrane pass occupies residues 100 to 122 (LYQQIVLYLLATLATPIFIHGSL). Residues 123–622 (LFVRLYYFER…LGGIEYRAVK (500 aa)) are Cytoplasmic-facing. Disordered regions lie at residues 180-276 (REAE…IDPE), 290-350 (KNQE…EDED), and 404-571 (PWTS…SIEN). Over residues 186 to 203 (SSSSPQSSSSQTSQPVST) the composition is skewed to low complexity. Positions 236 to 245 (EKIHFEEPQR) are enriched in basic and acidic residues. A compositionally biased stretch (polar residues) spans 335-344 (PATNSVGTGN). Low complexity predominate over residues 412–423 (TLSNSSKKGSLS). 2 stretches are compositionally biased toward acidic residues: residues 428 to 449 (DTED…SDIS) and 469 to 487 (YEED…DDGE). Over residues 521-533 (RSNTLDTPQQNTS) the composition is skewed to polar residues. A compositionally biased stretch (basic residues) spans 537–549 (KIRKKAPKRKTPR). Positions 553–563 (NASFNQHSNVS) are enriched in polar residues. The helical transmembrane segment at 623–646 (LLIKIIVVYYVGFNIIPGVMLSIW) threads the bilayer. The Extracellular segment spans residues 647 to 665 (IYCMPHYKNLMISSSISPA). The stretch at 666 to 682 (WWAFFTSQSSFNDLGLT) is an intramembrane region. The Extracellular portion of the chain corresponds to 683–693 (LTSNSMMSFNQ). The chain crosses the membrane as a helical span at residues 694-710 (NAFVQILCSFLIVIGNT). The Cytoplasmic portion of the chain corresponds to 711-754 (GFPILLRFIIWVMFKTARPLSLYKESLGFLLDHPRRCFTLLFPS). The helical transmembrane segment at 755-778 (VPTWWLFFILVVLNGFDLVIFCIL) threads the bilayer. At 779–793 (DLHDDTFKGVDMGYR) the chain is on the extracellular side. The stretch at 794 to 810 (VLNGLFQAFCTRTVGFS) is an intramembrane region. Over 811 to 817 (VMDLSQL) the chain is Extracellular. Residues 818-841 (HAATQVSYLIMMYISVLPIAISVR) traverse the membrane as a helical segment. Residues 842 to 874 (RTNVYEEQSLGVYAKENAEGVDESAPSNYVGSH) are Cytoplasmic-facing. The chain crosses the membrane as a helical span at residues 875-896 (LRNQLSYDLWYICLGLFIICIA). Residues 897-909 (EGKRLKEQDLRFS) are Extracellular-facing. Residues 910-928 (IFAVLFEIVSAYGTVGMSM) lie within the membrane without spanning it. The Extracellular segment spans residues 929–942 (GYPGVDCSLSGEFN). The helical transmembrane segment at 943-965 (VISKLVIIAMMIRGRHRGLPYTI) threads the bilayer. At 966–1056 (DRAIMLPNAA…RYVVRTVSEV (91 aa)) the chain is on the cytoplasmic side.

The protein belongs to the TrkH potassium transport family.

Its subcellular location is the cell membrane. The enzyme catalyses K(+)(in) = K(+)(out). It carries out the reaction chloride(in) = chloride(out). With respect to regulation, TRK1-mediated chloride conductance is blocked by 4,4'-diisothiocyanatostilbene-2,2'-disulfonic acid. In terms of biological role, potassium transporter that mediates K(+) influx, as well as Cl(-) efflux as a secondary function. TRK1 is the major K(+) uptake transporter that regulates membrane potential and intracellular pH. The TRK1-mediated Cl(-) efflux should serve as a Cl(-) detoxification route and may play a role in sustaining C.albicans on mammalian epithelial surfaces, or in physiological saline solutions such as saliva. Functionally, mediates candidacidal activities of cysteine-free peptides, but not of defensins. The hallmark of salivary gland-secreted histatin-5 (Hst 5) killing of C.albicans is the rapid efflux of cellular ATP and other small nucleotides and ions from the cell as well as concurrent intracellular uptake of propidium iodide (PI). TRK1 is the channel for Hst 5-induced killing and histatin-5 may directly or indirectly alter TRK1 function, allowing the efflux of larger anions, including ATP, and the influx of small cationic dyes, such as PI. This Candida albicans (strain SC5314 / ATCC MYA-2876) (Yeast) protein is Potassium transporter TRK1.